The sequence spans 540 residues: Glucose-6-phosphate isomerase (540 aa).

The Proton donor role is filled by glutamate 350. Residues histidine 381 and lysine 503 contribute to the active site.

This sequence belongs to the GPI family.

The protein localises to the cytoplasm. The enzyme catalyses alpha-D-glucose 6-phosphate = beta-D-fructose 6-phosphate. Its pathway is carbohydrate biosynthesis; gluconeogenesis. The protein operates within carbohydrate degradation; glycolysis; D-glyceraldehyde 3-phosphate and glycerone phosphate from D-glucose: step 2/4. Its function is as follows. Catalyzes the reversible isomerization of glucose-6-phosphate to fructose-6-phosphate. This chain is Glucose-6-phosphate isomerase, found in Burkholderia multivorans (strain ATCC 17616 / 249).